We begin with the raw amino-acid sequence, 336 residues long: HTH-type transcriptional repressor PurR (336 aa).

The HTH lacI-type domain maps to 2-56 (ATIKDVAKLAGVSTTTVSHVINKTRFVAEDTSKAVWDAIQQLNYSPSAVARSLKV). The segment at residues 4 to 23 (IKDVAKLAGVSTTTVSHVIN) is a DNA-binding region (H-T-H motif). Residues 48–56 (SAVARSLKV) mediate DNA binding. 4 residues coordinate hypoxanthine: Tyr73, Lys188, Phe219, and Asp273.

In terms of assembly, homodimer.

It functions in the pathway purine metabolism; purine nucleotide biosynthesis [regulation]. Its function is as follows. Is the main repressor of the genes involved in the de novo synthesis of purine nucleotides, regulating purB, purC, purEK, purF, purHD, purL, purMN and guaBA expression. PurR is allosterically activated to bind its cognate DNA by binding the purine corepressors, hypoxanthine or guanine, thereby effecting transcription repression. This chain is HTH-type transcriptional repressor PurR, found in Actinobacillus pleuropneumoniae serotype 3 (strain JL03).